The sequence spans 112 residues: Nitrogen regulatory protein P-II (112 aa).

An O-UMP-tyrosine modification is found at Tyr-51.

This sequence belongs to the P(II) protein family. As to quaternary structure, homotrimer.

Its function is as follows. In nitrogen-limiting conditions, when the ratio of Gln to 2-ketoglutarate decreases, P-II is uridylylated to P-II-UMP. P-II-UMP allows the deadenylation of glutamine synthetase (GS), thus activating the enzyme. Conversely, in nitrogen excess P-II is deuridylated and promotes the adenylation of GS. P-II indirectly controls the transcription of the GS gene (glnA). P-II prevents NR-II-catalyzed conversion of NR-I to NR-I-phosphate, the transcriptional activator of glnA. When P-II is uridylylated to P-II-UMP, these events are reversed. This chain is Nitrogen regulatory protein P-II (glnB), found in Klebsiella oxytoca.